Consider the following 455-residue polypeptide: tRNA modification GTPase MnmE (455 aa).

(6S)-5-formyl-5,6,7,8-tetrahydrofolate-binding residues include Arg-25, Glu-85, and Arg-124. The 155-residue stretch at 221–375 (GLSTAIIGRP…IEERINKLFF (155 aa)) folds into the TrmE-type G domain. Residue Asn-231 participates in K(+) binding. GTP-binding positions include 231–236 (NVGKSS), 250–256 (TDIEGTT), and 275–278 (DTAG). Ser-235 is a binding site for Mg(2+). K(+)-binding residues include Thr-250, Ile-252, and Thr-255. Thr-256 is a binding site for Mg(2+). Residue Lys-455 coordinates (6S)-5-formyl-5,6,7,8-tetrahydrofolate.

It belongs to the TRAFAC class TrmE-Era-EngA-EngB-Septin-like GTPase superfamily. TrmE GTPase family. Homodimer. Heterotetramer of two MnmE and two MnmG subunits. It depends on K(+) as a cofactor.

Its subcellular location is the cytoplasm. Its function is as follows. Exhibits a very high intrinsic GTPase hydrolysis rate. Involved in the addition of a carboxymethylaminomethyl (cmnm) group at the wobble position (U34) of certain tRNAs, forming tRNA-cmnm(5)s(2)U34. In Streptococcus mutans serotype c (strain ATCC 700610 / UA159), this protein is tRNA modification GTPase MnmE.